We begin with the raw amino-acid sequence, 1002 residues long: Lon protease homolog, mitochondrial (1002 aa).

Residues 102-313 (VIALPLPHRP…LTLELVKKEM (212 aa)) form the Lon N-terminal domain. Residue 468 to 475 (GPPGVGKT) coordinates ATP. The region spanning 811-995 (QTPVGVVMGL…NEIFDIAFQS (185 aa)) is the Lon proteolytic domain. Active-site residues include serine 901 and lysine 944.

Belongs to the peptidase S16 family. In terms of assembly, homohexamer or homoheptamer. Organized in a ring with a central cavity.

It is found in the mitochondrion matrix. It catalyses the reaction Hydrolysis of proteins in presence of ATP.. In terms of biological role, ATP-dependent serine protease that mediates the selective degradation of misfolded, unassembled or oxidatively damaged polypeptides as well as certain short-lived regulatory proteins in the mitochondrial matrix. May also have a chaperone function in the assembly of inner membrane protein complexes. Participates in the regulation of mitochondrial gene expression and in the maintenance of the integrity of the mitochondrial genome. Binds to mitochondrial DNA in a site-specific manner. The polypeptide is Lon protease homolog, mitochondrial (Oryza sativa subsp. indica (Rice)).